Here is a 418-residue protein sequence, read N- to C-terminus: MSTLEEVLREAYKLVTPSEEEERELKKVTEKVKALIADAINKYGIEAEIGVYGSSARSTWLPGQRDIDIFIVLTNRNINIKDVITLLSRYFSERGVTWSMRYAQHPYLSLLVDGYEVDVVPCYKISFGERPITAADRTPLHHKFLVEKLSEEQRRDVRLLKLFMKTIGVYGAEIKVEGFSGYLTELLVAYYGSFIDVLKAASRWRPYRTYITFSESRAKFKAPLVVVDPVDPERNVAAAVSLTSMSTFILASRRFLKNPSITYFQQRQGAVIKTNVVEVVFPYPNEPPDIVWGRYKRIGRSVFNWLKQCGFRVYRWGVESDEKSYVSLIYVVEQIELPPYMLHRGPPVYDGAVDAFVEKYLDKDIIGPFVQGSRVYVIKRRRYTNISDCLKTYLGKGDYTIRINLYEGALVRKNAWIT.

Positions 54 and 57 each coordinate ATP. Residues Ser54 and Arg57 each coordinate CTP. 3 residues coordinate Mg(2+): Asp66, Asp68, and Asp118. Positions 141, 161, and 170 each coordinate ATP. His141, Lys161, and Tyr170 together coordinate CTP.

The protein belongs to the tRNA nucleotidyltransferase/poly(A) polymerase family. Archaeal CCA-adding enzyme subfamily. In terms of assembly, homodimer. It depends on Mg(2+) as a cofactor.

The enzyme catalyses a tRNA precursor + 2 CTP + ATP = a tRNA with a 3' CCA end + 3 diphosphate. The catalysed reaction is a tRNA with a 3' CCA end + 2 CTP + ATP = a tRNA with a 3' CCACCA end + 3 diphosphate. Catalyzes the addition and repair of the essential 3'-terminal CCA sequence in tRNAs without using a nucleic acid template. Adds these three nucleotides in the order of C, C, and A to the tRNA nucleotide-73, using CTP and ATP as substrates and producing inorganic pyrophosphate. tRNA 3'-terminal CCA addition is required both for tRNA processing and repair. Also involved in tRNA surveillance by mediating tandem CCA addition to generate a CCACCA at the 3' terminus of unstable tRNAs. While stable tRNAs receive only 3'-terminal CCA, unstable tRNAs are marked with CCACCA and rapidly degraded. The polypeptide is CCA-adding enzyme (Pyrobaculum islandicum (strain DSM 4184 / JCM 9189 / GEO3)).